A 196-amino-acid chain; its full sequence is uncharacterized protein (196 aa).

This is an uncharacterized protein from Mycoplasma pneumoniae (strain ATCC 29342 / M129 / Subtype 1) (Mycoplasmoides pneumoniae).